The chain runs to 426 residues: Serine--tRNA ligase (426 aa).

Residue 235 to 237 (TAE) participates in L-serine binding. Residue 266-268 (RRE) participates in ATP binding. L-serine is bound at residue Glu-289. 353–356 (EISS) is a binding site for ATP. Ser-389 is an L-serine binding site.

This sequence belongs to the class-II aminoacyl-tRNA synthetase family. Type-1 seryl-tRNA synthetase subfamily. Homodimer. The tRNA molecule binds across the dimer.

It is found in the cytoplasm. It catalyses the reaction tRNA(Ser) + L-serine + ATP = L-seryl-tRNA(Ser) + AMP + diphosphate + H(+). The catalysed reaction is tRNA(Sec) + L-serine + ATP = L-seryl-tRNA(Sec) + AMP + diphosphate + H(+). It participates in aminoacyl-tRNA biosynthesis; selenocysteinyl-tRNA(Sec) biosynthesis; L-seryl-tRNA(Sec) from L-serine and tRNA(Sec): step 1/1. Functionally, catalyzes the attachment of serine to tRNA(Ser). Is also able to aminoacylate tRNA(Sec) with serine, to form the misacylated tRNA L-seryl-tRNA(Sec), which will be further converted into selenocysteinyl-tRNA(Sec). This is Serine--tRNA ligase from Nostoc punctiforme (strain ATCC 29133 / PCC 73102).